The chain runs to 303 residues: Kanosamine kinase (303 aa).

Belongs to the ROK (NagC/XylR) family.

The enzyme catalyses kanosamine + ATP = D-kanosamine 6-phosphate + ADP + H(+). It functions in the pathway antibiotic biosynthesis; rifamycin B biosynthesis. With respect to regulation, inhibited by Zn(2+), Cu(2+), and Fe(2+). Involved in the biosynthesis of 3-amino-5-hydroxybenzoate (AHBA), a compound that then serves as the starter unit for the assembly of a polyketide during the biosynthesis of rifamycin B and other ansamycin antibiotics. Catalyzes only the phosphorylation of kanosamine to yield kanosamine 6-phosphate. The protein is Kanosamine kinase (rifN) of Amycolatopsis mediterranei (strain S699) (Nocardia mediterranei).